Consider the following 560-residue polypeptide: Dihydroxy-acid dehydratase (560 aa).

Residue cysteine 52 coordinates [2Fe-2S] cluster. Mg(2+) is bound at residue aspartate 84. Cysteine 125 is a binding site for [2Fe-2S] cluster. The Mg(2+) site is built by aspartate 126 and lysine 127. At lysine 127 the chain carries N6-carboxylysine. Residue cysteine 197 participates in [2Fe-2S] cluster binding. Glutamate 448 lines the Mg(2+) pocket. Catalysis depends on serine 474, which acts as the Proton acceptor.

It belongs to the IlvD/Edd family. Homodimer. The cofactor is [2Fe-2S] cluster. Requires Mg(2+) as cofactor.

The enzyme catalyses (2R)-2,3-dihydroxy-3-methylbutanoate = 3-methyl-2-oxobutanoate + H2O. It catalyses the reaction (2R,3R)-2,3-dihydroxy-3-methylpentanoate = (S)-3-methyl-2-oxopentanoate + H2O. The protein operates within amino-acid biosynthesis; L-isoleucine biosynthesis; L-isoleucine from 2-oxobutanoate: step 3/4. It functions in the pathway amino-acid biosynthesis; L-valine biosynthesis; L-valine from pyruvate: step 3/4. Its function is as follows. Functions in the biosynthesis of branched-chain amino acids. Catalyzes the dehydration of (2R,3R)-2,3-dihydroxy-3-methylpentanoate (2,3-dihydroxy-3-methylvalerate) into 2-oxo-3-methylpentanoate (2-oxo-3-methylvalerate) and of (2R)-2,3-dihydroxy-3-methylbutanoate (2,3-dihydroxyisovalerate) into 2-oxo-3-methylbutanoate (2-oxoisovalerate), the penultimate precursor to L-isoleucine and L-valine, respectively. This Leptospira borgpetersenii serovar Hardjo-bovis (strain JB197) protein is Dihydroxy-acid dehydratase.